Consider the following 134-residue polypeptide: Thyrotropin subunit beta (134 aa).

The N-terminal stretch at 1 to 16 (MSPFFMMSLLFGLTFG) is a signal peptide. 6 disulfides stabilise this stretch: C22/C72, C36/C87, C39/C125, C47/C103, C51/C105, and C108/C115. N-linked (GlcNAc...) asparagine glycosylation occurs at N43.

This sequence belongs to the glycoprotein hormones subunit beta family. In terms of assembly, heterodimer of a common alpha chain and a unique beta chain which confers biological specificity to thyrotropin, lutropin, follitropin and gonadotropin.

The protein localises to the secreted. Functionally, indispensable for the control of thyroid structure and metabolism. This is Thyrotropin subunit beta (TSHB) from Gallus gallus (Chicken).